We begin with the raw amino-acid sequence, 667 residues long: UvrABC system protein B (667 aa).

The Helicase ATP-binding domain maps to 25 to 414 (TGLQRGDKHQ…GVVVEQIIRP (390 aa)). 38–45 (GVTGSGKT) is an ATP binding site. The Beta-hairpin motif lies at 91–114 (YYDYYQPEAYVPTTDTFIEKDSSI). Residues 430-596 (QVDDLIHEIR…TVKKSLRSIL (167 aa)) enclose the Helicase C-terminal domain. Residues 624 to 659 (KNEIARVKEEMLAAAANLEFEKAAELRDRMLELDKL) form the UVR domain.

This sequence belongs to the UvrB family. As to quaternary structure, forms a heterotetramer with UvrA during the search for lesions. Interacts with UvrC in an incision complex.

Its subcellular location is the cytoplasm. Its function is as follows. The UvrABC repair system catalyzes the recognition and processing of DNA lesions. A damage recognition complex composed of 2 UvrA and 2 UvrB subunits scans DNA for abnormalities. Upon binding of the UvrA(2)B(2) complex to a putative damaged site, the DNA wraps around one UvrB monomer. DNA wrap is dependent on ATP binding by UvrB and probably causes local melting of the DNA helix, facilitating insertion of UvrB beta-hairpin between the DNA strands. Then UvrB probes one DNA strand for the presence of a lesion. If a lesion is found the UvrA subunits dissociate and the UvrB-DNA preincision complex is formed. This complex is subsequently bound by UvrC and the second UvrB is released. If no lesion is found, the DNA wraps around the other UvrB subunit that will check the other stand for damage. This chain is UvrABC system protein B, found in Syntrophotalea carbinolica (strain DSM 2380 / NBRC 103641 / GraBd1) (Pelobacter carbinolicus).